The primary structure comprises 175 residues: DDB1- and CUL4-associated factor 16 (175 aa).

The interval 1 to 42 (MGPRNPSPDPLSESESEEEENTNYLNESSGEEWDSSEEEDPV) is disordered. Acidic residues-rich tracts occupy residues 12-21 (SESESEEEEN) and 29-41 (SGEEWDSSEEEDP). The residue at position 61 (Lys61) is an N6-acetyllysine.

Interacts with DDB1 and CUL4A.

It localises to the nucleus. The protein operates within protein modification; protein ubiquitination. Functions as a substrate recognition component for CUL4-DDB1 E3 ubiquitin-protein ligase complex, which mediates ubiquitination and proteasome-dependent degradation of nuclear proteins. In Bos taurus (Bovine), this protein is DDB1- and CUL4-associated factor 16 (DCAF16).